A 306-amino-acid polypeptide reads, in one-letter code: uncharacterized protein (306 aa).

The stretch at 13 to 39 (NMLNEIAANNNLLNNKNNQTNQLNNNQ) forms a coiled coil. 3 disordered regions span residues 44-76 (YNNQ…HQQN), 103-204 (DSKE…QSGQ), and 216-249 (QKQL…TMQH). Over residues 119–201 (HQQPIQNNPS…QFAQPNQYNQ (83 aa)) the composition is skewed to low complexity. Residues 218-235 (QLDKNQPEKIPSKPEKNQ) show a composition bias toward basic and acidic residues. Residues 279-299 (LFDYIIIPIALVLVFLFLVHP) form a helical membrane-spanning segment.

The protein localises to the membrane. This is an uncharacterized protein from Acanthamoeba polyphaga mimivirus (APMV).